Consider the following 313-residue polypeptide: Cytochrome c biogenesis protein CcsA (313 aa).

8 helical membrane-spanning segments follow: residues 9–29 (ILTH…LITF), 44–64 (GIIV…ISSG), 71–91 (LYES…IPYF), 111–131 (GFAT…VPAL), 143–163 (MILG…LLVI), 217–237 (VISL…VWAN), 244–264 (WNWD…AIYL), and 278–298 (AIVA…VNLL).

This sequence belongs to the CcmF/CycK/Ccl1/NrfE/CcsA family. In terms of assembly, may interact with Ccs1.

It is found in the plastid. The protein localises to the chloroplast thylakoid membrane. Required during biogenesis of c-type cytochromes (cytochrome c6 and cytochrome f) at the step of heme attachment. In Solanum bulbocastanum (Wild potato), this protein is Cytochrome c biogenesis protein CcsA.